We begin with the raw amino-acid sequence, 359 residues long: Protein RecA (359 aa).

Position 74 to 81 (74 to 81 (GPESSGKT)) interacts with ATP.

The protein belongs to the RecA family.

It is found in the cytoplasm. Can catalyze the hydrolysis of ATP in the presence of single-stranded DNA, the ATP-dependent uptake of single-stranded DNA by duplex DNA, and the ATP-dependent hybridization of homologous single-stranded DNAs. It interacts with LexA causing its activation and leading to its autocatalytic cleavage. The polypeptide is Protein RecA (Anaplasma marginale (strain Florida)).